Here is a 384-residue protein sequence, read N- to C-terminus: 1-deoxy-D-xylulose 5-phosphate reductoisomerase (384 aa).

Threonine 10, glycine 11, serine 12, isoleucine 13, arginine 37, asparagine 38, and asparagine 124 together coordinate NADPH. Lysine 125 contributes to the 1-deoxy-D-xylulose 5-phosphate binding site. Glutamate 126 contacts NADPH. Aspartate 150 serves as a coordination point for Mn(2+). Positions 151, 152, 176, and 199 each coordinate 1-deoxy-D-xylulose 5-phosphate. Glutamate 152 serves as a coordination point for Mn(2+). Position 205 (glycine 205) interacts with NADPH. 1-deoxy-D-xylulose 5-phosphate is bound by residues serine 212, asparagine 217, lysine 218, and glutamate 221. Glutamate 221 contacts Mn(2+).

Belongs to the DXR family. Requires Mg(2+) as cofactor. Mn(2+) serves as cofactor.

The catalysed reaction is 2-C-methyl-D-erythritol 4-phosphate + NADP(+) = 1-deoxy-D-xylulose 5-phosphate + NADPH + H(+). The protein operates within isoprenoid biosynthesis; isopentenyl diphosphate biosynthesis via DXP pathway; isopentenyl diphosphate from 1-deoxy-D-xylulose 5-phosphate: step 1/6. Catalyzes the NADPH-dependent rearrangement and reduction of 1-deoxy-D-xylulose-5-phosphate (DXP) to 2-C-methyl-D-erythritol 4-phosphate (MEP). The protein is 1-deoxy-D-xylulose 5-phosphate reductoisomerase of Clostridium perfringens (strain ATCC 13124 / DSM 756 / JCM 1290 / NCIMB 6125 / NCTC 8237 / Type A).